The sequence spans 780 residues: Lethal(3)malignant brain tumor-like protein 3 (780 aa).

The tract at residues 1-64 (MTESASSTSG…VKKATATTTW (64 aa)) is interaction with RBPJ. Required for transcription repressor activity on Notch target genes. The interval 149–220 (DKDQKEERDV…RKRRGDSAVL (72 aa)) is disordered. Acidic residues-rich tracts occupy residues 157–166 (DVEEDNEEED) and 185–194 (EDGEERDDEM). 3 MBT repeats span residues 232-332 (WCWA…LHPP), 340-439 (FNWQ…LITP), and 448-543 (FSWD…LQPP). A CCHHC-type; degenerate zinc finger spans residues 549–593 (LMEASEHGGCSTPGCKGIGHFKRARHLGPHSAANCPYSEINLNKD). The tract at residues 597-665 (PDRLSGEMPP…GAREEPTVQQ (69 aa)) is disordered. The interaction with DCAF5 stretch occupies residues 600–710 (LSGEMPPASP…PASKVSKWST (111 aa)). The residue at position 608 (serine 608) is a Phosphoserine. Lysine 637 is covalently cross-linked (Glycyl lysine isopeptide (Lys-Gly) (interchain with G-Cter in SUMO2)). The span at 643 to 661 (RTESEMRTSHEARGAREEP) shows a compositional bias: basic and acidic residues. Residue lysine 704 forms a Glycyl lysine isopeptide (Lys-Gly) (interchain with G-Cter in SUMO2) linkage. An SAM domain is found at 708 to 772 (WSTDEVSEFI…FNSILMFKAA (65 aa)).

In terms of assembly, interacts with RNF2. Interacts (via SAM domain) with SAMD1 (via SAM domain); the interaction mediates L3MBTL3 binding to chromatin. Interacts with RBPJ; the interaction is required for L3MBTL3 localization to chromatin and is impaired by Notch-derived peptides containing the intracellular domain (NICD). Interacts (via SAM domain) with KDM1A. Interacts with DCAF5. Interacts with DNMT1. Interacts with E2F1. Interacts with SOX2. Interacts with SFMBT1.

Its subcellular location is the nucleus. Its function is as follows. Is a negative regulator of Notch target genes expression, required for RBPJ-mediated transcriptional repression. It recruits KDM1A to Notch-responsive elements and promotes KDM1A-mediated H3K4me demethylation. Involved in the regulation of ubiquitin-dependent degradation of a set of methylated non-histone proteins, including SOX2, DNMT1 and E2F1. It acts as an adapter recruiting the CRL4-DCAF5 E3 ubiquitin ligase complex to methylated target proteins. Required for normal maturation of myeloid progenitor cells. This chain is Lethal(3)malignant brain tumor-like protein 3, found in Homo sapiens (Human).